The following is a 591-amino-acid chain: Adsorption protein P2 (591 aa).

A disulfide bond links Cys254 and Cys277.

It is found in the virion. Its function is as follows. Adsorption protein. In association with P31 and trimeric P5, forms the spike complexes located at the 5-fold vertices of the capsid. Involved in recognition and attachment to the receptor on the surface of the host. Likely triggers the processes of vertex disassembly, membrane tube formation, and subsequent DNA injection. Essential for viral infectivity. This is Adsorption protein P2 (II) from Acinetobacter calcoaceticus (Arthrobacter siderocapsulatus).